We begin with the raw amino-acid sequence, 104 residues long: Large ribosomal subunit protein uL24 (104 aa).

It belongs to the universal ribosomal protein uL24 family. In terms of assembly, part of the 50S ribosomal subunit.

In terms of biological role, one of two assembly initiator proteins, it binds directly to the 5'-end of the 23S rRNA, where it nucleates assembly of the 50S subunit. Functionally, one of the proteins that surrounds the polypeptide exit tunnel on the outside of the subunit. The chain is Large ribosomal subunit protein uL24 from Bartonella tribocorum (strain CIP 105476 / IBS 506).